The chain runs to 118 residues: Immunoglobulin heavy variable 3-9 (118 aa).

Positions 1–19 (MELGLSWIFLLAILKGVQC) are cleaved as a signal peptide. Residues 20 to 44 (EVQLVESGGGLVQPGRSLRLSCAAS) form a framework-1 region. An Ig-like domain is found at 20–118 (EVQLVESGGG…DTALYYCAKD (99 aa)). A disulfide bridge links Cys-41 with Cys-115. Residues 45–52 (GFTFDDYA) are complementarity-determining-1. The tract at residues 53-69 (MHWVRQAPGKGLEWVSG) is framework-2. Residues 70 to 77 (ISWNSGSI) are complementarity-determining-2. Residues 78-115 (GYADSVKGRFTISRDNAKNSLYLQMNSLRAEDTALYYC) are framework-3. The tract at residues 116-118 (AKD) is complementarity-determining-3.

Immunoglobulins are composed of two identical heavy chains and two identical light chains; disulfide-linked.

It is found in the secreted. The protein localises to the cell membrane. Functionally, v region of the variable domain of immunoglobulin heavy chains that participates in the antigen recognition. Immunoglobulins, also known as antibodies, are membrane-bound or secreted glycoproteins produced by B lymphocytes. In the recognition phase of humoral immunity, the membrane-bound immunoglobulins serve as receptors which, upon binding of a specific antigen, trigger the clonal expansion and differentiation of B lymphocytes into immunoglobulins-secreting plasma cells. Secreted immunoglobulins mediate the effector phase of humoral immunity, which results in the elimination of bound antigens. The antigen binding site is formed by the variable domain of one heavy chain, together with that of its associated light chain. Thus, each immunoglobulin has two antigen binding sites with remarkable affinity for a particular antigen. The variable domains are assembled by a process called V-(D)-J rearrangement and can then be subjected to somatic hypermutations which, after exposure to antigen and selection, allow affinity maturation for a particular antigen. The protein is Immunoglobulin heavy variable 3-9 of Homo sapiens (Human).